A 251-amino-acid polypeptide reads, in one-letter code: UPF0246 protein TM1040_2658 (251 aa).

Belongs to the UPF0246 family.

The chain is UPF0246 protein TM1040_2658 from Ruegeria sp. (strain TM1040) (Silicibacter sp.).